We begin with the raw amino-acid sequence, 495 residues long: GTPase Der (495 aa).

2 EngA-type G domains span residues 3 to 166 and 208 to 381; these read PVIA…MDAE and IKLA…DCST. Residues 9–16, 56–60, 118–121, 214–221, 261–265, and 326–329 each bind GTP; these read GRPNVGKS, DTGGI, NKTD, DTAGV, and NKWD. A KH-like domain is found at 382-466; it reads KRVGTSLLTR…PIRIQFKEGE (85 aa).

It belongs to the TRAFAC class TrmE-Era-EngA-EngB-Septin-like GTPase superfamily. EngA (Der) GTPase family. Associates with the 50S ribosomal subunit.

Its function is as follows. GTPase that plays an essential role in the late steps of ribosome biogenesis. This is GTPase Der from Yersinia pseudotuberculosis serotype IB (strain PB1/+).